The sequence spans 192 residues: Fumarylpyruvate hydrolase (192 aa).

A divalent metal cation is bound by residues glutamate 41, glutamate 43, and aspartate 72.

Belongs to the FAH family. Mg(2+) serves as cofactor. Mn(2+) is required as a cofactor.

It carries out the reaction 3-fumarylpyruvate + H2O = fumarate + pyruvate + H(+). It participates in aromatic compound metabolism; naphthalene degradation. Its function is as follows. Involved in the catabolism of gentisate (2,5-dihydroxybenzoate) a key intermediates in the aerobic pathways for the metabolism of a large number of aromatic compoun such as naphthalene. Catalyzes the hydrolytic cleavage of fumarylpyruvate to form fumarate and pyruvate. This is Fumarylpyruvate hydrolase from Ralstonia sp.